The sequence spans 427 residues: Imidazolonepropionase (427 aa).

The Fe(3+) site is built by H81 and H83. The Zn(2+) site is built by H81 and H83. Residues R90, Y153, and H186 each contribute to the 4-imidazolone-5-propanoate site. Y153 contacts N-formimidoyl-L-glutamate. H260 is a binding site for Fe(3+). H260 is a Zn(2+) binding site. E263 contacts 4-imidazolone-5-propanoate. D335 lines the Fe(3+) pocket. A Zn(2+)-binding site is contributed by D335. Residues N337 and G339 each contribute to the N-formimidoyl-L-glutamate site. Position 340 (S340) interacts with 4-imidazolone-5-propanoate.

The protein belongs to the metallo-dependent hydrolases superfamily. HutI family. Zn(2+) serves as cofactor. The cofactor is Fe(3+).

It is found in the cytoplasm. The enzyme catalyses 4-imidazolone-5-propanoate + H2O = N-formimidoyl-L-glutamate. Its pathway is amino-acid degradation; L-histidine degradation into L-glutamate; N-formimidoyl-L-glutamate from L-histidine: step 3/3. In terms of biological role, catalyzes the hydrolytic cleavage of the carbon-nitrogen bond in imidazolone-5-propanoate to yield N-formimidoyl-L-glutamate. It is the third step in the universal histidine degradation pathway. This Chloroflexus aggregans (strain MD-66 / DSM 9485) protein is Imidazolonepropionase.